A 212-amino-acid chain; its full sequence is Orotate phosphoribosyltransferase (212 aa).

5-phospho-alpha-D-ribose 1-diphosphate contacts are provided by residues Arg-97, Lys-101, His-103, and 123-131 (EDLISTGGS). Ser-127 lines the orotate pocket.

The protein belongs to the purine/pyrimidine phosphoribosyltransferase family. PyrE subfamily. Homodimer. Mg(2+) serves as cofactor.

The catalysed reaction is orotidine 5'-phosphate + diphosphate = orotate + 5-phospho-alpha-D-ribose 1-diphosphate. It functions in the pathway pyrimidine metabolism; UMP biosynthesis via de novo pathway; UMP from orotate: step 1/2. Its function is as follows. Catalyzes the transfer of a ribosyl phosphate group from 5-phosphoribose 1-diphosphate to orotate, leading to the formation of orotidine monophosphate (OMP). The chain is Orotate phosphoribosyltransferase from Phocaeicola vulgatus (strain ATCC 8482 / DSM 1447 / JCM 5826 / CCUG 4940 / NBRC 14291 / NCTC 11154) (Bacteroides vulgatus).